The sequence spans 831 residues: Cation/H(+) symporter 13 (831 aa).

Helical transmembrane passes span 50-70 (YALPLLLLQMSVIIVTSRLIF), 89-109 (VVLGPSFLGHNVIYMNMFLPA), 112-132 (KIIIQTLSNVGFVIHLFLLGL), 147-167 (ILIGTASYAFPFSLGNLTIMF), 214-234 (LATHCSMVCEVCSWFVALAFN), 250-270 (MIIGLLLVIYFVFRPIIVWLT), 282-302 (VVPFFPVLLLLSIASLSGEAM), 303-323 (GVHAAFGAFWLGVSLPDGPPL), 334-354 (FASNLFLPCFIAISGLQTNFF), 364-384 (VVMIEIILLITYGCKFLGTAA), 397-417 (LCLAFLMCCQGIIEVYTTIVW), and 430-450 (LVIITILFVTGISRFLVVYLY).

The protein belongs to the monovalent cation:proton antiporter 2 (CPA2) transporter (TC 2.A.37) family. CHX (TC 2.A.37.4) subfamily. In terms of tissue distribution, preferentially expressed in pollen before and after germination. Detected in pollen grains within anthers of the flower buds or in pollen on fully open flowers and on the stigma, and in pollen tubes growing in the style. Weakly expressed in roots.

Its subcellular location is the cell membrane. In terms of biological role, high-affinity potassium transporter that plays a role in K(+) acquisition. May operate as a K(+)/H(+) symporter. The polypeptide is Cation/H(+) symporter 13 (CHX13) (Arabidopsis thaliana (Mouse-ear cress)).